Here is a 407-residue protein sequence, read N- to C-terminus: 45 kDa calcium-binding protein (407 aa).

A signal peptide spans 1–35 (MVWSWVAMASRWGPLVGLAPRCLWLLGAVLLMDAS). Residue Asn-40 is glycosylated (N-linked (GlcNAc...) asparagine). 2 EF-hand domains span residues 98–133 (RSRR…KTAE) and 137–172 (EAME…SKGH). Ser-99 carries the phosphoserine modification. Residues Asp-111, Asn-113, Asp-115, Lys-117, Glu-122, Asp-150, Asp-152, Asp-154, His-156, and Glu-161 each coordinate Ca(2+). Phosphothreonine occurs at positions 193 and 217. The segment covering 249-259 (GSSLAGAPGPG) has biased composition (low complexity). The tract at residues 249 to 282 (GSSLAGAPGPGDQRQGPGIAGKSGKVLREPQPGC) is disordered. Positions 291, 293, 295, 297, and 302 each coordinate Ca(2+). 3 EF-hand domains span residues 291 to 313 (DQDG…TVEN), 323 to 358 (WVKD…MNEY), and 359 to 394 (NALN…FTGS). At Thr-310 the chain carries Phosphothreonine. The Ca(2+) site is built by Asp-336, Asn-338, and Asp-340. Position 344 is a phosphothreonine (Thr-344). Ca(2+)-binding residues include Glu-347, Asp-372, Asn-374, Asn-376, His-378, and Glu-383. The segment at 354 to 407 (PMNEYNALNEAKQMIAVADENQNHHLEPEEVLKYSEFFTGSKLVDYARSVHEEF) is necessary for intracellular retention in Golgi apparatus lumen.

The protein belongs to the CREC family.

The protein resides in the golgi apparatus lumen. Its function is as follows. May regulate calcium-dependent activities in the endoplasmic reticulum lumen or post-ER compartment. The chain is 45 kDa calcium-binding protein (SDF4) from Macaca fascicularis (Crab-eating macaque).